The chain runs to 511 residues: Histidine ammonia-lyase (511 aa).

The segment at residues Ala142–Gly144 is a cross-link (5-imidazolinone (Ala-Gly)). 2,3-didehydroalanine (Ser) is present on Ser143.

The protein belongs to the PAL/histidase family. Post-translationally, contains an active site 4-methylidene-imidazol-5-one (MIO), which is formed autocatalytically by cyclization and dehydration of residues Ala-Ser-Gly.

It is found in the cytoplasm. The enzyme catalyses L-histidine = trans-urocanate + NH4(+). It participates in amino-acid degradation; L-histidine degradation into L-glutamate; N-formimidoyl-L-glutamate from L-histidine: step 1/3. This is Histidine ammonia-lyase from Brucella canis (strain ATCC 23365 / NCTC 10854 / RM-666).